The sequence spans 166 residues: Large ribosomal subunit protein uL10 (166 aa).

The protein belongs to the universal ribosomal protein uL10 family. As to quaternary structure, part of the ribosomal stalk of the 50S ribosomal subunit. The N-terminus interacts with L11 and the large rRNA to form the base of the stalk. The C-terminus forms an elongated spine to which L12 dimers bind in a sequential fashion forming a multimeric L10(L12)X complex.

In terms of biological role, forms part of the ribosomal stalk, playing a central role in the interaction of the ribosome with GTP-bound translation factors. The sequence is that of Large ribosomal subunit protein uL10 from Bacillus cereus (strain G9842).